A 141-amino-acid chain; its full sequence is Arsenate reductase (141 aa).

Cys-12 serves as the catalytic Nucleophile; cysteine thioarsenate intermediate.

The protein belongs to the ArsC family. Monomer in solution.

The enzyme catalyses [glutaredoxin]-dithiol + arsenate + glutathione + H(+) = glutathionyl-S-S-[glutaredoxin] + arsenite + H2O. Its activity is regulated as follows. Inhibited by the thiol reagents iodoacetate (IAA) and N-ethylmaleimide (NEM). Activity is rapidly inactivated by the histidine-modifying reagent diethylpyrocarbonate (DEPC). Its function is as follows. Involved in resistance to arsenate. Catalyzes the reduction of arsenate [As(V)] to arsenite [As(III)]. The resulting arsenite is then extruded from the cell via the ArsAB transport system. The protein is Arsenate reductase of Escherichia coli.